Reading from the N-terminus, the 354-residue chain is 4-hydroxy-3-methylbut-2-en-1-yl diphosphate synthase (flavodoxin) (354 aa).

Cys-263, Cys-266, Cys-298, and Glu-305 together coordinate [4Fe-4S] cluster.

Belongs to the IspG family. Requires [4Fe-4S] cluster as cofactor.

The enzyme catalyses (2E)-4-hydroxy-3-methylbut-2-enyl diphosphate + oxidized [flavodoxin] + H2O + 2 H(+) = 2-C-methyl-D-erythritol 2,4-cyclic diphosphate + reduced [flavodoxin]. The protein operates within isoprenoid biosynthesis; isopentenyl diphosphate biosynthesis via DXP pathway; isopentenyl diphosphate from 1-deoxy-D-xylulose 5-phosphate: step 5/6. Converts 2C-methyl-D-erythritol 2,4-cyclodiphosphate (ME-2,4cPP) into 1-hydroxy-2-methyl-2-(E)-butenyl 4-diphosphate. The protein is 4-hydroxy-3-methylbut-2-en-1-yl diphosphate synthase (flavodoxin) of Fusobacterium nucleatum subsp. nucleatum (strain ATCC 25586 / DSM 15643 / BCRC 10681 / CIP 101130 / JCM 8532 / KCTC 2640 / LMG 13131 / VPI 4355).